Consider the following 382-residue polypeptide: V-type proton ATPase subunit C 1 (382 aa).

Residue Thr2 is modified to N-acetylthreonine.

Belongs to the V-ATPase C subunit family. V-ATPase is a heteromultimeric enzyme made up of two complexes: the ATP-hydrolytic V1 complex and the proton translocation V0 complex. The V1 complex consists of three catalytic AB heterodimers that form a heterohexamer, three peripheral stalks each consisting of EG heterodimers, one central rotor including subunits D and F, and the regulatory subunits C and H. The proton translocation complex V0 consists of the proton transport subunit a, a ring of proteolipid subunits c9c'', rotary subunit d, subunits e and f, and the accessory subunits ATP6AP1/Ac45 and ATP6AP2/PRR. In terms of tissue distribution, expressed in brain (at protein level).

The protein localises to the cytoplasmic vesicle. It is found in the secretory vesicle. Its subcellular location is the synaptic vesicle membrane. The protein resides in the clathrin-coated vesicle membrane. Functionally, subunit of the V1 complex of vacuolar(H+)-ATPase (V-ATPase), a multisubunit enzyme composed of a peripheral complex (V1) that hydrolyzes ATP and a membrane integral complex (V0) that translocates protons. V-ATPase is responsible for acidifying and maintaining the pH of intracellular compartments and in some cell types, is targeted to the plasma membrane, where it is responsible for acidifying the extracellular environment. Subunit C is necessary for the assembly of the catalytic sector of the enzyme and is likely to have a specific function in its catalytic activity. This is V-type proton ATPase subunit C 1 (Atp6v1c1) from Rattus norvegicus (Rat).